The primary structure comprises 152 residues: Ribosome maturation factor RimP (152 aa).

Belongs to the RimP family.

Its subcellular location is the cytoplasm. Its function is as follows. Required for maturation of 30S ribosomal subunits. The chain is Ribosome maturation factor RimP from Porphyromonas gingivalis (strain ATCC BAA-308 / W83).